Consider the following 136-residue polypeptide: Small ribosomal subunit protein uS9 (136 aa).

Residues 103–116 (PLKTEGHLSRDPRA) are compositionally biased toward basic and acidic residues. Positions 103–136 (PLKTEGHLSRDPRAKERRKYGLKKARKAPQFSKR) are disordered. Residues 117 to 136 (KERRKYGLKKARKAPQFSKR) show a composition bias toward basic residues.

It belongs to the universal ribosomal protein uS9 family.

The protein is Small ribosomal subunit protein uS9 (rpsI) of Prochlorococcus marinus (strain SARG / CCMP1375 / SS120).